The sequence spans 340 residues: MHNTDVVIIGAGPVGLFAVFQAGMLGMKCHVIDAQEVIGGQCITLYPEKPIYDIPAYPKIVAEELIKQLALQAAPFNPIYHLNQQAIELNKQDDFFEIKTSKNTLIKSKVIIIAAGAGSFGPNKPPLANIEDFESKSVFYFINDKSKFAGKNIVIAGGGDSAVDWAISLSDIANKIYLVHRRDKFTAAPESVRQLRHIAETDKIELITGYQLNALDGNNSELQSVIVKDLQNNTRKLDANILLPFFGLKQDLGSLANWGLNVKLHHIEVDSSYYQTNIEGIYAIGDIAHYVGKLKLILTGFAEAASSLHHAYSRVFDGKALHFEYSTTKNTGKRSKSVTK.

FAD-binding residues include D33, Q41, Y46, A86, F120, D286, and T327.

The protein belongs to the ferredoxin--NADP reductase type 2 family. Homodimer. It depends on FAD as a cofactor.

It catalyses the reaction 2 reduced [2Fe-2S]-[ferredoxin] + NADP(+) + H(+) = 2 oxidized [2Fe-2S]-[ferredoxin] + NADPH. The protein is Ferredoxin--NADP reductase of Rickettsia rickettsii (strain Sheila Smith).